Reading from the N-terminus, the 78-residue chain is Acyl carrier protein (78 aa).

One can recognise a Carrier domain in the interval 2–77; sequence SDIEQRVKQA…SAIDYVTKKL (76 aa). Position 37 is an O-(pantetheine 4'-phosphoryl)serine (Ser37).

This sequence belongs to the acyl carrier protein (ACP) family. In terms of processing, 4'-phosphopantetheine is transferred from CoA to a specific serine of apo-ACP by AcpS. This modification is essential for activity because fatty acids are bound in thioester linkage to the sulfhydryl of the prosthetic group.

It localises to the cytoplasm. It functions in the pathway lipid metabolism; fatty acid biosynthesis. Carrier of the growing fatty acid chain in fatty acid biosynthesis. The sequence is that of Acyl carrier protein from Acinetobacter baumannii (strain AB307-0294).